Consider the following 421-residue polypeptide: Trimethyllysine dioxygenase, mitochondrial (421 aa).

A mitochondrion-targeting transit peptide spans 1–15; sequence MWYHRLSHLHSRLQD. 2 positions are modified to N6-acetyllysine: Lys179 and Lys236. Fe cation is bound by residues His242, Asp244, and His389.

It belongs to the gamma-BBH/TMLD family. In terms of assembly, homodimer. It depends on Fe(2+) as a cofactor. L-ascorbate is required as a cofactor. In terms of tissue distribution, all isoforms, but isoform 8, are widely expressed in adult and fetal tissues. Isoform 8 is restricted to heart and skeletal muscle.

The protein resides in the mitochondrion matrix. It carries out the reaction N(6),N(6),N(6)-trimethyl-L-lysine + 2-oxoglutarate + O2 = (3S)-3-hydroxy-N(6),N(6),N(6)-trimethyl-L-lysine + succinate + CO2. It functions in the pathway amine and polyamine biosynthesis; carnitine biosynthesis. In terms of biological role, converts trimethyllysine (TML) into hydroxytrimethyllysine (HTML). The protein is Trimethyllysine dioxygenase, mitochondrial (TMLHE) of Homo sapiens (Human).